Consider the following 379-residue polypeptide: Omega-3 fatty acid desaturase, endoplasmic reticulum (379 aa).

A helical membrane pass occupies residues 52–72 (LSYVVRDVIFVATLIGIAIHL). The short motif at 97-101 (HDCGH) is the Histidine box-1 element. A Histidine box-2 motif is present at residues 133 to 137 (HKTHH). The next 2 membrane-spanning stretches (helical) occupy residues 213–233 (TLCW…FGSL) and 236–256 (FKIY…VTYL). Residues 300–304 (HVIHH) carry the Histidine box-3 motif.

Belongs to the fatty acid desaturase type 1 family.

It localises to the endoplasmic reticulum membrane. Its pathway is lipid metabolism; polyunsaturated fatty acid biosynthesis. Its function is as follows. ER (microsomal) omega-3 fatty acid desaturase introduces the third double bond in the biosynthesis of 18:3 fatty acids, important constituents of plant membranes. It is thought to use cytochrome b5 as an electron donor and to act on fatty acids esterified to phosphatidylcholine and, possibly, other phospholipids. This Nicotiana tabacum (Common tobacco) protein is Omega-3 fatty acid desaturase, endoplasmic reticulum (FAD3).